A 183-amino-acid polypeptide reads, in one-letter code: Orotate phosphoribosyltransferase (183 aa).

5-phospho-alpha-D-ribose 1-diphosphate is bound by residues Arg90, Lys91, Lys94, and 115 to 123; that span reads DDVATTGGS. 2 residues coordinate orotate: Thr119 and Arg147.

It belongs to the purine/pyrimidine phosphoribosyltransferase family. PyrE subfamily. Homodimer. It depends on Mg(2+) as a cofactor.

It carries out the reaction orotidine 5'-phosphate + diphosphate = orotate + 5-phospho-alpha-D-ribose 1-diphosphate. Its pathway is pyrimidine metabolism; UMP biosynthesis via de novo pathway; UMP from orotate: step 1/2. Catalyzes the transfer of a ribosyl phosphate group from 5-phosphoribose 1-diphosphate to orotate, leading to the formation of orotidine monophosphate (OMP). This Methanopyrus kandleri (strain AV19 / DSM 6324 / JCM 9639 / NBRC 100938) protein is Orotate phosphoribosyltransferase.